A 408-amino-acid polypeptide reads, in one-letter code: Lipoate--protein ligase 1 (408 aa).

The transit peptide at 1–18 (MKRIFRLVRRCHYSTEKR) directs the protein to the mitochondrion. In terms of domain architecture, BPL/LPL catalytic spans 60–242 (KFNEPILFLW…EFTKFYEQNY (183 aa)). ATP contacts are provided by Arg102, Gly107, and Tyr110. Residue Gly107 coordinates (R)-lipoate. Residue Asp153 participates in Mg(2+) binding. Lys160 contributes to the ATP binding site. Lys160 lines the (R)-lipoate pocket.

It belongs to the LplA family.

Its subcellular location is the mitochondrion. It carries out the reaction L-lysyl-[lipoyl-carrier protein] + (R)-lipoate + ATP = N(6)-[(R)-lipoyl]-L-lysyl-[lipoyl-carrier protein] + AMP + diphosphate + H(+). It catalyses the reaction (R)-dihydrolipoate + L-lysyl-[lipoyl-carrier protein] + ATP = N(6)-[(R)-dihydrolipoyl]-L-lysyl-[lipoyl-carrier protein] + AMP + diphosphate + H(+). The catalysed reaction is (R)-dihydrolipoate + ATP + H(+) = N(6)-[(R)-dihydrolipoyl]-5'-AMP + diphosphate. The enzyme catalyses N(6)-[(R)-dihydrolipoyl]-5'-AMP + L-lysyl-[lipoyl-carrier protein] = N(6)-[(R)-dihydrolipoyl]-L-lysyl-[lipoyl-carrier protein] + AMP + 2 H(+). Its pathway is protein modification; protein lipoylation via exogenous pathway; protein N(6)-(lipoyl)lysine from lipoate: step 1/2. It participates in protein modification; protein lipoylation via exogenous pathway; protein N(6)-(lipoyl)lysine from lipoate: step 2/2. Its activity is regulated as follows. Inhibited by the lipoate analog 8-bromo-octanoate (BrO). Catalytic activity is increased in the presence of Mg(2+). Its function is as follows. Catalyzes both the ATP-dependent activation of exogenously supplied lipoate to lipoyl-AMP and the transfer of the activated lipoyl onto the lipoyl domains of lipoate-dependent enzymes. In the mitochondrion, functions as a redox switch between two lipoylation routes. Senses the oxidation state of lipoate and determines which downstream enzymes will be lipoylated. In low reducing conditions, uses lipoate in its oxidized ring form to lipoylate glycine cleavage system H-protein GCVH. In high reducing conditions and together with LipL2, uses reduced lipoate (dihydrolipoate) to lipoylate the E2 component of the branched chain alpha-ketoacid dehydrogenase complex BCKDH-E2/BCDH and the E2 component of the alpha-ketoglutarate dehydrogenase complex KDH. LipL1 is responsible for catalysing the activation of lipoate, forming lipoyl-AMP while LipL2 is required but is not capable of catalyzing this reaction. The sequence is that of Lipoate--protein ligase 1 from Plasmodium falciparum (isolate 3D7).